Here is a 222-residue protein sequence, read N- to C-terminus: Putative cobalt transport protein CbiM (222 aa).

6 helical membrane passes run 8–28 (LPMEWAIVWYIISAIVVGYGI), 43–63 (PLLAISGAFMFVLSSLKLPSV), 75–95 (LGAILFGPAITSVLATIVLLF), 107–127 (TLGANIFSMGIMGPFVGYLVF), 134–154 (LNITWVVMLTAIFADWATYLT), and 178–198 (IFAITQIPLAIAEGLITALLW).

It belongs to the CbiM family. As to quaternary structure, forms an energy-coupling factor (ECF) transporter complex composed of an ATP-binding protein (A component, CbiO), a transmembrane protein (T component, CbiQ) and 2 possible substrate-capture proteins (S components, CbiM and CbiN) of unknown stoichimetry.

It is found in the cell membrane. It participates in cofactor biosynthesis; adenosylcobalamin biosynthesis. Functionally, part of the energy-coupling factor (ECF) transporter complex CbiMNOQ involved in cobalt import. The protein is Putative cobalt transport protein CbiM of Methanococcus voltae (strain ATCC BAA-1334 / A3).